The primary structure comprises 518 residues: Trigger factor (518 aa).

A PPIase FKBP-type domain is found at glycine 170–alanine 255. A disordered region spans residues glutamate 447 to alanine 518. 2 stretches are compositionally biased toward basic residues: residues proline 452 to alanine 468 and proline 501 to alanine 518.

This sequence belongs to the FKBP-type PPIase family. Tig subfamily.

The protein localises to the cytoplasm. The catalysed reaction is [protein]-peptidylproline (omega=180) = [protein]-peptidylproline (omega=0). In terms of biological role, involved in protein export. Acts as a chaperone by maintaining the newly synthesized protein in an open conformation. Functions as a peptidyl-prolyl cis-trans isomerase. The chain is Trigger factor from Maricaulis maris (strain MCS10) (Caulobacter maris).